Consider the following 291-residue polypeptide: Taste receptor type 2 member 16 (291 aa).

Residue Met-1 is a topological domain, extracellular. A helical transmembrane segment spans residues 2 to 22 (IPIQLTVFFMIIYVLESLTII). The Cytoplasmic segment spans residues 23 to 41 (VQSSLIVAVLGREWLQVRR). A helical transmembrane segment spans residues 42-62 (LMPVDMILISLGISRFCLQWA). Residues 63-84 (SMLNNFCSYFNLNYVLCNLTIT) are Extracellular-facing. Asn-80 is a glycosylation site (N-linked (GlcNAc...) asparagine). The chain crosses the membrane as a helical span at residues 85-105 (WEFFNILTFWLNSLLTVFYCI). Residues 106-125 (KVSSFTHHIFLWLRWRILRL) lie on the Cytoplasmic side of the membrane. The helical transmembrane segment at 126–146 (FPWILLGSLMITCVTIIPSAI) threads the bilayer. Topologically, residues 147–182 (GNYIQIQLLTMEHLPRNSTVTDKLEKFHQYQFQAHT) are extracellular. Asn-163 carries N-linked (GlcNAc...) asparagine glycosylation. Residues 183 to 203 (VALVIPFILFLASTILLMASL) traverse the membrane as a helical segment. Over 204-228 (TKQIQHHSTGHCNPSMKAHFTALRS) the chain is Cytoplasmic. A helical membrane pass occupies residues 229–249 (LAVLFIVFTSYFLTILITIIG). Residues 250-257 (TLFDKRCW) are Extracellular-facing. Residues 258–278 (LWVWEAFVYAFILMHSTSLML) traverse the membrane as a helical segment. At 279–291 (SSPTLKRILKGKC) the chain is on the cytoplasmic side.

Belongs to the G-protein coupled receptor T2R family. In terms of assembly, interacts with RTP3 and RTP4.

It is found in the cell membrane. In terms of biological role, receptor that may play a role in the perception of bitterness and is gustducin-linked. May play a role in sensing the chemical composition of the gastrointestinal content. The activity of this receptor may stimulate alpha gustducin, mediate PLC-beta-2 activation and lead to the gating of TRPM5. The sequence is that of Taste receptor type 2 member 16 (TAS2R16) from Pan troglodytes (Chimpanzee).